A 1363-amino-acid polypeptide reads, in one-letter code: Clustered mitochondria protein homolog (1363 aa).

TPR repeat units follow at residues 29–63 (LPSFFNVGDDYLTIPSSYEENIADLKQALNIIVLC) and 120–154 (KEKSYNLASIYEQISRFREVIGLHYIDRLSNDIGS). The interval 172-191 (KEAKKEESTEKEQQEKEELS) is disordered. Residues 283-316 (STINFNPTIKINEKGKFNKSYLLYDLVCQLSPLF) form a TPR 3 repeat. In terms of domain architecture, Clu spans 361-631 (DLSRSQLSSL…RTTPRDIEFI (271 aa)). The disordered stretch occupies residues 521–544 (PVITSPTTDAEGKNEAEEPESEPV). One copy of the TPR 4 repeat lies at 548–581 (VYGLSSDGSRILEDKSFEEPLKQIGDFFHLKPHK). A compositionally biased stretch (basic and acidic residues) spans 799-832 (AKAEKKREEEKEKEEKEATESEDKKEKKEDKEDA). Residues 799–844 (AKAEKKREEEKEKEEKEATESEDKKEKKEDKEDAEKEEAEAEEEVP) form a disordered region. The segment covering 833-842 (EKEEAEAEEE) has biased composition (acidic residues). TPR repeat units lie at residues 1057-1090 (VEEIYSNARSHLVQGNKEMGMALFNELLAINESI), 1141-1174 (ITAYMNSAYYESSNEQYLNSLKLYKEAMNTWSLV), 1183-1216 (INTLTNLSESLLKIKAYDSALELLQEALEITKKL), and 1225-1258 (GFIYYRIANIVVTLNKFKESKELFDKAYDIFMKL). The disordered stretch occupies residues 1291-1363 (QQETQKKSKT…SGSKKSNKKK (73 aa)). Positions 1330–1342 (PPQSNPEIANQSI) are enriched in polar residues.

This sequence belongs to the CLU family. As to quaternary structure, may associate with the eukaryotic translation initiation factor 3 (eIF-3) complex.

It is found in the cytoplasm. In terms of biological role, mRNA-binding protein involved in proper cytoplasmic distribution of mitochondria. This chain is Clustered mitochondria protein homolog, found in Candida albicans (strain SC5314 / ATCC MYA-2876) (Yeast).